Here is a 278-residue protein sequence, read N- to C-terminus: Transmembrane protein 41B (278 aa).

A disordered region spans residues 1-31; sequence MQVHERSHTGGHTFQCNHGNEKKAPAAGKVH. 6 consecutive transmembrane segments (helical) span residues 39-59, 96-116, 142-162, 184-204, 212-232, and 249-269; these read MSLLILVSIFLCAASVMFLVY, FYVEVLVAYFTTYIFLQTFAI, CSGLGASFCYLLSYLVGRPVV, LINYIIFLRITPFLPNWFINI, PLKVFFLGTFIGVAPPSFVAI, and SWNSVIILMVLAVLSILPAIF. The interval 127 to 238 is VTT domain; required for its function in autophagy; sequence GFLYPFPLAL…FVAIKAGTTL (112 aa).

Belongs to the TMEM41 family.

The protein resides in the endoplasmic reticulum membrane. It is found in the endomembrane system. The enzyme catalyses a 1,2-diacyl-sn-glycero-3-phospho-L-serine(in) = a 1,2-diacyl-sn-glycero-3-phospho-L-serine(out). The catalysed reaction is cholesterol(in) = cholesterol(out). It carries out the reaction a 1,2-diacyl-sn-glycero-3-phosphocholine(in) = a 1,2-diacyl-sn-glycero-3-phosphocholine(out). It catalyses the reaction a 1,2-diacyl-sn-glycero-3-phosphoethanolamine(in) = a 1,2-diacyl-sn-glycero-3-phosphoethanolamine(out). In terms of biological role, phospholipid scramblase involved in lipid homeostasis and membrane dynamics processes. Has phospholipid scramblase activity toward cholesterol and phosphatidylserine, as well as phosphatidylethanolamine and phosphatidylcholine. Required for autophagosome formation: participates in early stages of autophagosome biogenesis at the endoplasmic reticulum (ER) membrane by reequilibrating the leaflets of the ER as lipids are extracted by atg2 (atg2a or atg2b) to mediate autophagosome assembly. In addition to autophagy, involved in other processes in which phospholipid scramblase activity is required. Required for normal motor neuron development. In Xenopus laevis (African clawed frog), this protein is Transmembrane protein 41B.